A 319-amino-acid chain; its full sequence is D-alanine--D-alanine ligase B (319 aa).

The ATP-grasp domain maps to 117-312 (KQVWQSLGPA…FQQLVLAILA (196 aa)). 143-198 (ATELGFPLIVKPAHEGSSIGMAKVNSVDELIAAWKAASTYDSQVLVEQWIQGPEFT) provides a ligand contact to ATP. Mg(2+)-binding residues include aspartate 266, glutamate 279, and asparagine 281.

The protein belongs to the D-alanine--D-alanine ligase family. Requires Mg(2+) as cofactor. Mn(2+) is required as a cofactor.

It is found in the cytoplasm. The enzyme catalyses 2 D-alanine + ATP = D-alanyl-D-alanine + ADP + phosphate + H(+). The protein operates within cell wall biogenesis; peptidoglycan biosynthesis. Cell wall formation. This chain is D-alanine--D-alanine ligase B, found in Pseudomonas syringae pv. tomato (strain ATCC BAA-871 / DC3000).